We begin with the raw amino-acid sequence, 436 residues long: Eukaryotic peptide chain release factor subunit 1 (436 aa).

The protein belongs to the eukaryotic release factor 1 family. Heterodimer of two subunits, one of which binds GTP.

The protein resides in the cytoplasm. In terms of biological role, directs the termination of nascent peptide synthesis (translation) in response to the termination codon UGA. In L.striatus UAA and UAG codes for glutamine. This is Eukaryotic peptide chain release factor subunit 1 (eRF1) from Loxodes striatus.